The primary structure comprises 432 residues: Adenosine 3'-phospho 5'-phosphosulfate transporter 1 (432 aa).

A run of 9 helical transmembrane segments spans residues 5-25 (WWAV…ETPE), 40-60 (VVNA…VQYF), 109-129 (ALKL…WGVL), 154-174 (FLVL…CVLC), 238-258 (WEYL…LSSG), 265-285 (PATT…DSFT), 299-319 (SVQM…GSLL), 353-373 (LFIF…IMTL), and 387-407 (GHTV…ALLL). At Ser-427 the chain carries Phosphoserine.

Belongs to the nucleotide-sugar transporter family. SLC35B subfamily. Highly expressed in the placenta, pancreas, mammary gland and skeletal muscle. Weakly or not expressed in colon, heart and prostate. Expressed in the brain, predominantly in frontal lobe gray matter, subcortical frontal white matter and cerebellum.

It localises to the golgi apparatus membrane. It catalyses the reaction 3'-phosphoadenylyl sulfate(in) + adenosine 3',5'-bisphosphate(out) = 3'-phosphoadenylyl sulfate(out) + adenosine 3',5'-bisphosphate(in). In terms of biological role, probably functions as a 3'-phosphoadenylyl sulfate:adenosine 3',5'-bisphosphate antiporter at the Golgi membranes. Mediates the transport from the cytosol into the lumen of the Golgi of 3'-phosphoadenylyl sulfate/adenosine 3'-phospho 5'-phosphosulfate (PAPS), a universal sulfuryl donor for sulfation events that take place in that compartment. The protein is Adenosine 3'-phospho 5'-phosphosulfate transporter 1 of Homo sapiens (Human).